A 156-amino-acid polypeptide reads, in one-letter code: ATP synthase subunit b (156 aa).

A helical transmembrane segment spans residues 7–29 (LIGQSITFIFFVWFSMKFVWPPI).

This sequence belongs to the ATPase B chain family. F-type ATPases have 2 components, F(1) - the catalytic core - and F(0) - the membrane proton channel. F(1) has five subunits: alpha(3), beta(3), gamma(1), delta(1), epsilon(1). F(0) has three main subunits: a(1), b(2) and c(10-14). The alpha and beta chains form an alternating ring which encloses part of the gamma chain. F(1) is attached to F(0) by a central stalk formed by the gamma and epsilon chains, while a peripheral stalk is formed by the delta and b chains.

It is found in the cell inner membrane. In terms of biological role, f(1)F(0) ATP synthase produces ATP from ADP in the presence of a proton or sodium gradient. F-type ATPases consist of two structural domains, F(1) containing the extramembraneous catalytic core and F(0) containing the membrane proton channel, linked together by a central stalk and a peripheral stalk. During catalysis, ATP synthesis in the catalytic domain of F(1) is coupled via a rotary mechanism of the central stalk subunits to proton translocation. Component of the F(0) channel, it forms part of the peripheral stalk, linking F(1) to F(0). This Thiobacillus denitrificans (strain ATCC 25259 / T1) protein is ATP synthase subunit b.